We begin with the raw amino-acid sequence, 238 residues long: Orotidine 5'-phosphate decarboxylase (238 aa).

Residues aspartate 10, lysine 32, 59–68 (DLKLHDIPNT), threonine 122, arginine 184, glutamine 193, glycine 213, and arginine 214 contribute to the substrate site. Lysine 61 serves as the catalytic Proton donor.

It belongs to the OMP decarboxylase family. Type 1 subfamily. As to quaternary structure, homodimer.

It catalyses the reaction orotidine 5'-phosphate + H(+) = UMP + CO2. The protein operates within pyrimidine metabolism; UMP biosynthesis via de novo pathway; UMP from orotate: step 2/2. Its function is as follows. Catalyzes the decarboxylation of orotidine 5'-monophosphate (OMP) to uridine 5'-monophosphate (UMP). This chain is Orotidine 5'-phosphate decarboxylase, found in Bacillus cereus (strain G9842).